Reading from the N-terminus, the 326-residue chain is 4-hydroxythreonine-4-phosphate dehydrogenase (326 aa).

Positions 133 and 134 each coordinate substrate. A divalent metal cation contacts are provided by H163, H208, and H263. Residues K271, N280, and R289 each contribute to the substrate site.

The protein belongs to the PdxA family. In terms of assembly, homodimer. Zn(2+) is required as a cofactor. The cofactor is Mg(2+). It depends on Co(2+) as a cofactor.

The protein localises to the cytoplasm. It catalyses the reaction 4-(phosphooxy)-L-threonine + NAD(+) = 3-amino-2-oxopropyl phosphate + CO2 + NADH. It participates in cofactor biosynthesis; pyridoxine 5'-phosphate biosynthesis; pyridoxine 5'-phosphate from D-erythrose 4-phosphate: step 4/5. Catalyzes the NAD(P)-dependent oxidation of 4-(phosphooxy)-L-threonine (HTP) into 2-amino-3-oxo-4-(phosphooxy)butyric acid which spontaneously decarboxylates to form 3-amino-2-oxopropyl phosphate (AHAP). The protein is 4-hydroxythreonine-4-phosphate dehydrogenase of Pseudoalteromonas atlantica (strain T6c / ATCC BAA-1087).